Consider the following 58-residue polypeptide: Small ribosomal subunit protein bS21C (58 aa).

Residues 38–58 (YEKPSLRRKRKAEAARKGGRY) form a disordered region. Positions 49-58 (AEAARKGGRY) are enriched in basic and acidic residues.

The protein belongs to the bacterial ribosomal protein bS21 family.

The chain is Small ribosomal subunit protein bS21C (rpsU3) from Nostoc sp. (strain PCC 7120 / SAG 25.82 / UTEX 2576).